A 931-amino-acid polypeptide reads, in one-letter code: Protein translocase subunit SecA (931 aa).

ATP is bound by residues glutamine 87, 105–109 (GEGKT), and aspartate 515. Cysteine 915, cysteine 917, cysteine 926, and histidine 927 together coordinate Zn(2+).

Belongs to the SecA family. In terms of assembly, monomer and homodimer. Part of the essential Sec protein translocation apparatus which comprises SecA, SecYEG and auxiliary proteins SecDF-YajC and YidC. Zn(2+) is required as a cofactor.

The protein resides in the cell inner membrane. It is found in the cytoplasm. The enzyme catalyses ATP + H2O + cellular proteinSide 1 = ADP + phosphate + cellular proteinSide 2.. Functionally, part of the Sec protein translocase complex. Interacts with the SecYEG preprotein conducting channel. Has a central role in coupling the hydrolysis of ATP to the transfer of proteins into and across the cell membrane, serving both as a receptor for the preprotein-SecB complex and as an ATP-driven molecular motor driving the stepwise translocation of polypeptide chains across the membrane. The protein is Protein translocase subunit SecA of Burkholderia pseudomallei (strain K96243).